Reading from the N-terminus, the 655-residue chain is Probable glucan endo-1,3-beta-glucosidase btgC (655 aa).

Disordered regions lie at residues 1–61 and 89–114; these read MSGD…ATPG and SGVDAFRDTDGGNFPAERGYNAPGSD. Residues 1–282 are Cytoplasmic-facing; it reads MSGDPRSFSF…PKPGTGSRKR (282 aa). Residues 19–33 show a composition bias toward polar residues; sequence DSSQQPLHPTNTMAD. Basic and acidic residues predominate over residues 89 to 98; the sequence is SGVDAFRDTD. Residues 283 to 303 form a helical; Signal-anchor for type II membrane protein membrane-spanning segment; it reads GWIVGIILAVVIVGAIVGGAV. The Extracellular portion of the chain corresponds to 304-655; sequence GGTLGNREKE…IPDCGGKTAT (352 aa). Positions 305–338 are disordered; the sequence is GTLGNREKESPSSSETASGDEKVNGDLGKDSDEI. Residues 323–338 show a composition bias toward basic and acidic residues; sequence GDEKVNGDLGKDSDEI. N426 is a glycosylation site (N-linked (GlcNAc...) asparagine). E458 functions as the Proton donor in the catalytic mechanism. E557 serves as the catalytic Nucleophile. N-linked (GlcNAc...) asparagine glycosylation is found at N576 and N602.

The protein belongs to the glycosyl hydrolase 17 family.

It localises to the cell membrane. The catalysed reaction is Hydrolysis of (1-&gt;3)-beta-D-glucosidic linkages in (1-&gt;3)-beta-D-glucans.. In terms of biological role, glucanases play a role in cell expansion during growth, in cell-cell fusion during mating, and in spore release during sporulation. This enzyme may be involved in beta-glucan degradation. Active on laminarin and lichenan. The protein is Probable glucan endo-1,3-beta-glucosidase btgC (btgC) of Aspergillus terreus (strain NIH 2624 / FGSC A1156).